The following is a 151-amino-acid chain: Large ribosomal subunit protein uL15 (151 aa).

Positions 1-51 are disordered; the sequence is MKSLRLEDAVPQSGSRHRKLRVGRGHSAGQGKTSGRGMRGQKCRSGGGVRP. A compositionally biased stretch (basic residues) spans 15–24; it reads SRHRKLRVGR. Positions 26–38 are enriched in gly residues; that stretch reads HSAGQGKTSGRGM.

The protein belongs to the universal ribosomal protein uL15 family. Part of the 50S ribosomal subunit.

In terms of biological role, binds to the 23S rRNA. This Gloeobacter violaceus (strain ATCC 29082 / PCC 7421) protein is Large ribosomal subunit protein uL15.